Consider the following 1061-residue polypeptide: MPGPRRPAGSRLRLLLLLLLPPLLLLLRGSHAGNLTVAVVLPLANTSYPWSWARVGPAVELALAQVKARPDLLPGWTVRTVLGSSENALGVCSDTAAPLAAVDLKWEHNPAVFLGPGCVYAAAPVGRFTAHWRVPLLTAGAPALGFGVKDEYALTTRAGPSYAKLGDFVAALHRRLGWERQALMLYAYRPGDEEHCFFLVEGLFMRVRDRLNITVDHLEFAEDDLSHYTRLLRTMPRKGRVIYICSSPDAFRTLMLLALEAGLCGEDYVFFHLDIFGQSLQGGQGPAPRRPWERGDGQDVSARQAFQAAKIITYKDPDNPEYLEFLKQLKHLAYEQFNFTMEDGLVNTIPASFHDGLLLYIQAVTETLAHGGTVTDGENITQRMWNRSFQGVTGYLKIDSSGDRETDFSLWDMDPENGAFRVVLNYNGTSQELVAVSGRKLNWPLGYPPPDIPKCGFDNEDPACNQDHLSTLEVLALVGSLSLLGILIVSFFIYRKMQLEKELASELWRVRWEDVEPSSLERHLRSAGSRLTLSGRGSNYGSLLTTEGQFQVFAKTAYYKGNLVAVKRVNRKRIELTRKVLFELKHMRDVQNEHLTRFVGACTDPPNICILTEYCPRGSLQDILENESITLDWMFRYSLTNDIVKGMLFLHNGAICSHGNLKSSNCVVDGRFVLKITDYGLESFRDLDPEQGHTVYAKKLWTAPELLRMASPPVRGSQAGDVYSFGIILQEIALRSGVFHVEGLDLSPKEIIERVTRGEQPPFRPSLALQSHLEELGLLMQRCWAEDPQERPPFQQIRLTLRKFNRENSSNILDNLLSRMEQYANNLEELVEERTQAYLEEKRKAEALLYQILPHSVAEQLKRGETVQAEAFDSVTIYFSDIVGFTALSAESTPMQVVTLLNDLYTCFDAVIDNFDVYKVETIGDAYMVVSGLPVRNGRLHACEVARMALALLDAVRSFRIRHRPQEQLRLRIGIHTGPVCAGVVGLKMPRYCLFGDTVNTASRMESNGEALKIHLSSETKAVLEEFGGFELELRGDVEMKGKGKVRTYWLLGERGSSTRG.

Positions 1–32 (MPGPRRPAGSRLRLLLLLLLPPLLLLLRGSHA) are cleaved as a signal peptide. Over 33–473 (GNLTVAVVLP…CNQDHLSTLE (441 aa)) the chain is Extracellular. Residues Asn-34 and Asn-45 are each glycosylated (N-linked (GlcNAc...) asparagine). Ser-85, Gly-117, and Cys-118 together coordinate chloride. 2 disulfide bridges follow: Cys-92–Cys-118 and Cys-196–Cys-245. Residues Asn-212, Asn-338, Asn-379, Asn-386, and Asn-427 are each glycosylated (N-linked (GlcNAc...) asparagine). Cys-455 and Cys-464 are oxidised to a cystine. The helical transmembrane segment at 474–494 (VLALVGSLSLLGILIVSFFIY) threads the bilayer. At 495 to 1061 (RKMQLEKELA…LGERGSSTRG (567 aa)) the chain is on the cytoplasmic side. A phosphoserine mark is found at Ser-519 and Ser-529. The region spanning 528–805 (GSRLTLSGRG…QIRLTLRKFN (278 aa)) is the Protein kinase domain. Thr-532 is modified (phosphothreonine). Phosphoserine is present on residues Ser-534, Ser-538, and Ser-542. Phosphothreonine is present on Thr-545. A Guanylate cyclase domain is found at 876–1006 (TIYFSDIVGF…DTVNTASRME (131 aa)).

The protein belongs to the adenylyl cyclase class-4/guanylyl cyclase family. In terms of assembly, homodimer. Phosphorylation of the protein kinase-like domain is required for full activation by ANP.

The protein localises to the membrane. The enzyme catalyses GTP = 3',5'-cyclic GMP + diphosphate. Its function is as follows. Receptor for the atrial natriuretic peptide NPPA/ANP and the brain natriuretic peptide NPPB/BNP which are potent vasoactive hormones playing a key role in cardiovascular homeostasis. Plays an essential role in the regulation of endothelial cell senescence and vascular aging. Upon activation by ANP or BNP, stimulates the production of cyclic guanosine monophosphate (cGMP) that promotes vascular tone and volume homeostasis by activation of protein kinase cGMP-dependent 1/PRKG1 and subsequently PRKAA1, thereby controlling blood pressure and maintaining cardiovascular homeostasis. This chain is Atrial natriuretic peptide receptor 1, found in Homo sapiens (Human).